The chain runs to 75 residues: Scuwaprin-a (75 aa).

The first 24 residues, 1-24 (MSSGGLLLLLGLLTLWAELTPVSG), serve as a signal peptide directing secretion. In terms of domain architecture, WAP spans 27–72 (RPKKPGLCPPRPQKPPCVKECKNDWSCPGQQKCCSYGCIDECRDPI). 4 cysteine pairs are disulfide-bonded: Cys-34-Cys-60, Cys-43-Cys-64, Cys-47-Cys-59, and Cys-53-Cys-68.

Belongs to the venom waprin family. Expressed by the venom gland.

It is found in the secreted. Damages membranes of susceptible bacteria. Has no hemolytic activity. Not toxic to mice. Does not inhibit the proteinases elastase and cathepsin G. The protein is Scuwaprin-a of Oxyuranus scutellatus scutellatus (Australian taipan).